The primary structure comprises 238 residues: Flagellar L-ring protein (238 aa).

An N-terminal signal peptide occupies residues 1 to 23 (MVKLFSYKIKYYLTAFFIIIIQS). A lipid anchor (N-palmitoyl cysteine) is attached at C24. C24 is lipidated: S-diacylglycerol cysteine.

The protein belongs to the FlgH family. The basal body constitutes a major portion of the flagellar organelle and consists of four rings (L,P,S, and M) mounted on a central rod.

Its subcellular location is the cell outer membrane. The protein localises to the bacterial flagellum basal body. Its function is as follows. Assembles around the rod to form the L-ring and probably protects the motor/basal body from shearing forces during rotation. This is Flagellar L-ring protein from Buchnera aphidicola subsp. Schizaphis graminum (strain Sg).